The sequence spans 203 residues: Thymidylate kinase (203 aa).

14 to 21 provides a ligand contact to ATP; it reads GGEGIGKS.

The protein belongs to the thymidylate kinase family.

It carries out the reaction dTMP + ATP = dTDP + ADP. Its function is as follows. Phosphorylation of dTMP to form dTDP in both de novo and salvage pathways of dTTP synthesis. This chain is Thymidylate kinase, found in Rickettsia rickettsii (strain Iowa).